A 736-amino-acid chain; its full sequence is Segment polarity protein dishevelled homolog DVL-2 (736 aa).

The 83-residue stretch at 11–93 folds into the DIX domain; the sequence is VGETKVIYHL…RVVSWLVSSD (83 aa). The segment at 93-255 is disordered; the sequence is DTPQPEVAPP…RMERTSSFSS (163 aa). Positions 111–122 are enriched in pro residues; that stretch reads VPPPPPLPPLPP. Over residues 159-171 the composition is skewed to basic and acidic residues; that stretch reads LRRDRPRRRDSSE. Positions 193 to 208 are enriched in low complexity; sequence ESSSTLMTSELESTSL. Phosphoserine is present on serine 211. Residues 218–230 are compositionally biased toward polar residues; the sequence is SRFSSSTEQSSAS. Basic residues predominate over residues 232–244; sequence LLKRHRRRRKQRP. The PDZ domain maps to 267–339; sequence TVTLNMEKYN…NDDAVRVLRD (73 aa). Positions 433 to 507 constitute a DEP domain; it reads PESGLEVRDR…SEQCYYVFGD (75 aa). Positions 558–568 are enriched in pro residues; that stretch reads PHPYSPQPPPY. The interval 558-665 is disordered; that stretch reads PHPYSPQPPP…PNLRALPGLH (108 aa). Low complexity-rich tracts occupy residues 581-598 and 614-629; these read ASSQ…TRSD and SKSG…SRGG.

The protein belongs to the DSH family. Interacts through its PDZ domain with the C-terminal regions of VANGL1 and VANGL2. Interacts with Rac. Interacts with ARRB1; the interaction is enhanced by phosphorylation of DVL1. Can form large oligomers (via DIX domain). Interacts (via DIX domain) with DIXDC1 (via DIX domain). Interacts (via DEP domain) with AP2M1 and the AP-2 complex. Interacts with FAM105B/otulin. Interacts with DCDC2. Interacts (when phosphorylated) with FOXK1 and FOXK2; the interaction induces DVL2 nuclear translocation. Interacts with MAPK15. Interacts with PKD1 (via extracellular domain). Interacts with LMBR1L. Phosphorylated by CSNK1D. WNT3A induces DVL2 phosphorylation by CSNK1E and MARK kinases. In terms of processing, ubiquitinated via 'Lys-63'-linked polyubiquitin chains; leading to its autophagy-mediated degradation. In terms of tissue distribution, ubiquitous.

Its subcellular location is the cell membrane. It localises to the cytoplasm. The protein localises to the cytosol. It is found in the cytoplasmic vesicle. The protein resides in the nucleus. Plays a role in the signal transduction pathways mediated by multiple Wnt genes. Participates both in canonical and non-canonical Wnt signaling by binding to the cytoplasmic C-terminus of frizzled family members and transducing the Wnt signal to down-stream effectors. Promotes internalization and degradation of frizzled proteins upon Wnt signaling. The chain is Segment polarity protein dishevelled homolog DVL-2 (Dvl2) from Mus musculus (Mouse).